A 328-amino-acid chain; its full sequence is Peroxidase 63 (328 aa).

The signal sequence occupies residues 1–27; the sequence is MAEQSQLKNLTIILLLLCLSFQSLSFA. 4 cysteine pairs are disulfide-bonded: Cys41–Cys122, Cys74–Cys79, Cys128–Cys324, and Cys207–Cys234. His72 serves as the catalytic Proton acceptor. Ca(2+) is bound by residues Asp73, Gly78, Asp80, and Ser82. Residue Pro170 coordinates substrate. Heme b is bound at residue His200. Thr201 provides a ligand contact to Ca(2+). Residues Asn217 and Asn218 are each glycosylated (N-linked (GlcNAc...) asparagine). Ca(2+) is bound by residues Asp248, Thr251, and Asp256.

The protein belongs to the peroxidase family. Classical plant (class III) peroxidase subfamily. The cofactor is heme b. Ca(2+) is required as a cofactor.

The protein resides in the secreted. It catalyses the reaction 2 a phenolic donor + H2O2 = 2 a phenolic radical donor + 2 H2O. Removal of H(2)O(2), oxidation of toxic reductants, biosynthesis and degradation of lignin, suberization, auxin catabolism, response to environmental stresses such as wounding, pathogen attack and oxidative stress. These functions might be dependent on each isozyme/isoform in each plant tissue. The polypeptide is Peroxidase 63 (PER63) (Arabidopsis thaliana (Mouse-ear cress)).